Reading from the N-terminus, the 243-residue chain is 1-(5-phosphoribosyl)-5-[(5-phosphoribosylamino)methylideneamino] imidazole-4-carboxamide isomerase (243 aa).

Asp8 serves as the catalytic Proton acceptor. Asp130 functions as the Proton donor in the catalytic mechanism.

It belongs to the HisA/HisF family.

The protein localises to the cytoplasm. The catalysed reaction is 1-(5-phospho-beta-D-ribosyl)-5-[(5-phospho-beta-D-ribosylamino)methylideneamino]imidazole-4-carboxamide = 5-[(5-phospho-1-deoxy-D-ribulos-1-ylimino)methylamino]-1-(5-phospho-beta-D-ribosyl)imidazole-4-carboxamide. It participates in amino-acid biosynthesis; L-histidine biosynthesis; L-histidine from 5-phospho-alpha-D-ribose 1-diphosphate: step 4/9. In Vesicomyosocius okutanii subsp. Calyptogena okutanii (strain HA), this protein is 1-(5-phosphoribosyl)-5-[(5-phosphoribosylamino)methylideneamino] imidazole-4-carboxamide isomerase.